We begin with the raw amino-acid sequence, 218 residues long: N-(5'-phosphoribosyl)anthranilate isomerase (218 aa).

Belongs to the TrpF family.

The catalysed reaction is N-(5-phospho-beta-D-ribosyl)anthranilate = 1-(2-carboxyphenylamino)-1-deoxy-D-ribulose 5-phosphate. It participates in amino-acid biosynthesis; L-tryptophan biosynthesis; L-tryptophan from chorismate: step 3/5. In Halobacterium salinarum (strain ATCC 29341 / DSM 671 / R1), this protein is N-(5'-phosphoribosyl)anthranilate isomerase.